Consider the following 768-residue polypeptide: MSNLGKSTGSRKDTKMRIRAFPMTMDEKYVNSIWDLLKNAIQEIQRKNNSGLSFEELYRNAYTMVLHKHGEKLYTGLREVVTEHLINKVREDVLNSLNNNFLQTLNQAWNDHQTAMVMIRDILMYMDRVYVQQNNVENVYNLGLIIFRDQVVRYGCIRDHLRQTLLDMIARERKGEVVDRGAIRNACQMLMILGLEGRSVYEEDFEAPFLEMSAEFFQMESQKFLAENSASVYIKKVEARINEEIERVMHCLDKSTEEPIVKVVERELISKHMKTIVEMENSGLVHMLKNGKTEDLACMYKLFSRVPNGLKTMCECMSLYLREQGKALVSEEGEGKNPVDYIQGLLDLKSRFDRFLQESFSNDRLFKQTIAGDFEYFLNLNSRSPEYLSLFIDDKLKKGVKGLTEQEVESILDKAMVLFRFMQEKDVFERYYKQHLARRLLTNKSVSDDSEKNMISKLKTECGCQFTSKLEGMFRDMSISNTTMDEFRQHLQTTGVSLGGVDLTVRVLTTGYWPTQSATPKCNIPPAPRHAFEIFRRFYLAKHSGRQLTLQHHMGSADLNATFYGPVKKEDGSEVGVGGAQVTGSNTRKHILQVSTFQMTILMLFNNREKYTFEEIQQETDIPERELVRALQSLACGKPTQRVLTKEPKSKEIESGHMFTVNDQFTSKLHRVKIQTVAAKQGESDPERKETRQKVDDDRKHEIEAAIVRIMKSRKKMQHNVLVAEVTQQLKARFLPSPVVIKKRIEGLIEREYLARTPEDRKVYTYVA.

Positions 677–698 are disordered; that stretch reads VAAKQGESDPERKETRQKVDDD. Residues 682–698 show a composition bias toward basic and acidic residues; the sequence is GESDPERKETRQKVDDD. The 63-residue stretch at 698–760 folds into the Cullin neddylation domain; that stretch reads DRKHEIEAAI…REYLARTPED (63 aa). Lys712 is covalently cross-linked (Glycyl lysine isopeptide (Lys-Gly) (interchain with G-Cter in NEDD8)).

It belongs to the cullin family. In terms of assembly, component of multiple BCR (BTB-CUL3-RBX1) E3 ubiquitin-protein ligase complexes formed of cul3, rbx1 and a variable BTB domain-containing protein acting as both, adapter to cullin and substrate recognition subunit. Interacts with btbd6. Post-translationally, neddylated. Attachment of NEDD8 is required for the E3 ubiquitin-protein ligase activity of the SCF-like complex.

The protein resides in the nucleus. Its pathway is protein modification; protein ubiquitination. Functionally, probable core component of cullin-based SCF-like E3 ubiquitin-protein ligase complexes which mediate the ubiquitination and subsequent proteasomal degradation of target proteins. The E3 ubiquitin-protein ligase activity of the complex is dependent on the neddylation of the cullin subunit. Involved in ER-Golgi transport by regulating the size of COPII coats, thereby playing a key role in collagen export, which is required for embryonic stem (ES) cells division. May play a role in the regulation of mittotic entry via ubiquitination of aurka. The chain is Cullin-3 (cul3) from Xenopus tropicalis (Western clawed frog).